A 460-amino-acid chain; its full sequence is Glucan endo-1,3-beta-D-glucosidase (460 aa).

A signal peptide spans 1-26 (MAANVQTSSLLFLVFLLLQNFYSANS). The Proton donor role is filled by Glu123. Glu268 acts as the Nucleophile in catalysis. The interval 352 to 371 (NTQNPTTPATPTPTPKAAGS) is disordered. Asn355 is a glycosylation site (N-linked (GlcNAc...) asparagine). Cys373 and Cys435 are disulfide-bonded. A glycan (N-linked (GlcNAc...) asparagine) is linked at Asn447.

This sequence belongs to the glycosyl hydrolase 17 family. As to quaternary structure, homodimer. In terms of processing, glycosylated. Contains two additional disulfide bonds, but it is unclear if they are between the pairs Cys-392-Cys-398 and Cys-407-Cys-453 (PudMed:18096638) or between the pairs Cys-392-Cys-453 and Cys-398-Cys-407 (PudMed:12392450). In terms of tissue distribution, expressed only in pollen.

Its subcellular location is the secreted. The catalysed reaction is Hydrolysis of (1-&gt;3)-beta-D-glucosidic linkages in (1-&gt;3)-beta-D-glucans.. This is Glucan endo-1,3-beta-D-glucosidase (OLE9) from Olea europaea (Common olive).